The sequence spans 67 residues: Conotoxin Im3.1 (67 aa).

The signal sequence occupies residues 1-20; the sequence is MMSTLVVLLTICLLMLPLTA. The propeptide occupies 21-52; the sequence is RQLDADQLADQLAERMEDISADQNRWFDPVKR. 3 disulfides stabilise this stretch: Cys53/Cys63, Cys54/Cys61, and Cys59/Cys64.

The protein belongs to the conotoxin M superfamily. In terms of tissue distribution, expressed by the venom duct.

It localises to the secreted. Functionally, probable neurotoxin. The chain is Conotoxin Im3.1 from Conus imperialis (Imperial cone).